The chain runs to 432 residues: Adenylosuccinate synthetase (432 aa).

GTP is bound by residues 12–18 and 40–42; these read GDEGKGK and GHT. Asp13 acts as the Proton acceptor in catalysis. Mg(2+) contacts are provided by Asp13 and Gly40. IMP is bound by residues 13–16, 38–41, Thr133, Arg147, Gln228, Thr243, and Arg307; these read DEGK and NAGH. The Proton donor role is filled by His41. 303–309 contributes to the substrate binding site; it reads TTTGRPR. GTP contacts are provided by residues Arg309, 335–337, and 417–419; these read KLD and GVG.

The protein belongs to the adenylosuccinate synthetase family. In terms of assembly, homodimer. It depends on Mg(2+) as a cofactor.

Its subcellular location is the cytoplasm. The enzyme catalyses IMP + L-aspartate + GTP = N(6)-(1,2-dicarboxyethyl)-AMP + GDP + phosphate + 2 H(+). The protein operates within purine metabolism; AMP biosynthesis via de novo pathway; AMP from IMP: step 1/2. In terms of biological role, plays an important role in the de novo pathway of purine nucleotide biosynthesis. Catalyzes the first committed step in the biosynthesis of AMP from IMP. The chain is Adenylosuccinate synthetase from Nocardioides sp. (strain ATCC BAA-499 / JS614).